We begin with the raw amino-acid sequence, 236 residues long: Ribitol-5-phosphate cytidylyltransferase (236 aa).

Residues 7 to 10 (LAGG) and 80 to 86 (GTDRNET) each bind CTP.

It belongs to the IspD/TarI cytidylyltransferase family. TarI subfamily.

The catalysed reaction is D-ribitol 5-phosphate + CTP + H(+) = CDP-L-ribitol + diphosphate. It participates in cell wall biogenesis; poly(ribitol phosphate) teichoic acid biosynthesis. Its function is as follows. Catalyzes the transfer of the cytidylyl group of CTP to D-ribitol 5-phosphate. In Listeria monocytogenes serovar 1/2a (strain ATCC BAA-679 / EGD-e), this protein is Ribitol-5-phosphate cytidylyltransferase.